Consider the following 104-residue polypeptide: Protein RnfH (104 aa).

The segment at P80–N104 is disordered.

Belongs to the UPF0125 (RnfH) family.

This chain is Protein RnfH, found in Alcanivorax borkumensis (strain ATCC 700651 / DSM 11573 / NCIMB 13689 / SK2).